We begin with the raw amino-acid sequence, 370 residues long: Neutral protease 2 homolog AFUA_4G13750 (370 aa).

The first 19 residues, 1-19 (MKVTILASAILALINGALA), serve as a signal peptide directing secretion. The propeptide occupies 20 to 172 (LPANTPTLDV…PQAIKLLDRR (153 aa)). Disulfide bonds link cysteine 178–cysteine 250 and cysteine 257–cysteine 275. Histidine 300 contributes to the Zn(2+) binding site. The active site involves glutamate 301. Zn(2+) is bound by residues histidine 304 and aspartate 315.

The protein belongs to the peptidase M35 family. Requires Zn(2+) as cofactor.

The protein localises to the secreted. The catalysed reaction is Preferential cleavage of bonds with hydrophobic residues in P1'. Also 3-Asn-|-Gln-4 and 8-Gly-|-Ser-9 bonds in insulin B chain.. Functionally, secreted metalloproteinase that allows assimilation of proteinaceous substrates. Shows high activities on basic nuclear substrates such as histone and protamine. May be involved in virulence. In Aspergillus fumigatus (strain ATCC MYA-4609 / CBS 101355 / FGSC A1100 / Af293) (Neosartorya fumigata), this protein is Neutral protease 2 homolog AFUA_4G13750.